A 397-amino-acid polypeptide reads, in one-letter code: LIM/homeobox protein Lhx9 (397 aa).

Residues 40–60 (RSKTESRLAKGGQMNGRETNM) are disordered. 2 consecutive LIM zinc-binding domains span residues 69–130 (ALCA…RFSV) and 131–193 (QRCA…LLQG). The homeobox DNA-binding region spans 267–326 (TKRMATSFKHHQLRTMKSYFAINHNPDAKDLKQLAQKTGLTKRVLQVWFQNARAKFRRNL). 2 disordered regions span residues 330–363 (ENGG…TTLT) and 378–397 (SNLD…TNLF). A compositionally biased stretch (low complexity) spans 353-363 (LTPPGTATTLT). A compositionally biased stretch (polar residues) spans 387 to 397 (SPSQTTLTNLF).

The protein resides in the nucleus. Functionally, may be involved in gonadal development. This Gallus gallus (Chicken) protein is LIM/homeobox protein Lhx9 (LHX9).